The sequence spans 426 residues: Glutamyl-tRNA reductase (426 aa).

Substrate-binding positions include 49-52 (TCNR), S109, 114-116 (EGQ), and Q120. The active-site Nucleophile is the C50. NADP(+) is bound at residue 189–194 (GAGETG).

It belongs to the glutamyl-tRNA reductase family. In terms of assembly, homodimer.

It catalyses the reaction (S)-4-amino-5-oxopentanoate + tRNA(Glu) + NADP(+) = L-glutamyl-tRNA(Glu) + NADPH + H(+). The protein operates within porphyrin-containing compound metabolism; protoporphyrin-IX biosynthesis; 5-aminolevulinate from L-glutamyl-tRNA(Glu): step 1/2. It participates in porphyrin-containing compound metabolism; chlorophyll biosynthesis. Its function is as follows. Catalyzes the NADPH-dependent reduction of glutamyl-tRNA(Glu) to glutamate 1-semialdehyde (GSA). The chain is Glutamyl-tRNA reductase from Chlorobium chlorochromatii (strain CaD3).